A 354-amino-acid chain; its full sequence is Uroporphyrinogen decarboxylase (354 aa).

Substrate-binding positions include 27–31, D77, Y154, T209, and H327; that span reads RQAGR.

It belongs to the uroporphyrinogen decarboxylase family. In terms of assembly, homodimer.

It localises to the cytoplasm. It catalyses the reaction uroporphyrinogen III + 4 H(+) = coproporphyrinogen III + 4 CO2. It participates in porphyrin-containing compound metabolism; protoporphyrin-IX biosynthesis; coproporphyrinogen-III from 5-aminolevulinate: step 4/4. In terms of biological role, catalyzes the decarboxylation of four acetate groups of uroporphyrinogen-III to yield coproporphyrinogen-III. This is Uroporphyrinogen decarboxylase from Enterobacter sp. (strain 638).